The following is a 366-amino-acid chain: MATPQISRKALASLLLLVAAAAAVSTASADDVLALTESTFEKEVGQDRAALVEFYAPWCGHCKKLAPEYEKLGASFKKAKSVLIAKVDCDEHKSVCSKYGVSGYPTIQWFPKGSLEPKKYEGQRTAEALAEYVNSEAATNVKIAAVPSSVVVLTPETFDSVVLDETKDVLVEFYAPWCGHCKHLAPIYEKLASVYKQDEGVVIANLDADKHTALAEKYGVSGFPTLKFFPKGNKAGEDYDGGRELDDFVKFINEKCGTSRDSKGQLTSEAGIVESLAPLVKEFLGAANDKRKEALSKMEEDVAKLTGPAAKYGKIYVNSAKKIMEKGSEYTKKESERLQRMLEKSISPSKADEFVIKKNILSTFSS.

The signal sequence occupies residues 1 to 29; it reads MATPQISRKALASLLLLVAAAAAVSTASA. Thioredoxin domains are found at residues 30-138 and 139-257; these read DDVL…SEAA and TNVK…EKCG. Active-site nucleophile residues include Cys-59, Cys-62, Cys-178, and Cys-181. Intrachain disulfides connect Cys-59-Cys-62 and Cys-178-Cys-181.

The protein belongs to the protein disulfide isomerase family.

The protein resides in the secreted. The enzyme catalyses Catalyzes the rearrangement of -S-S- bonds in proteins.. In terms of biological role, acts as a protein-folding catalyst that interacts with nascent polypeptides to catalyze the formation, isomerization, and reduction or oxidation of disulfide bonds. May play a role in storage protein biogenesis. The chain is Protein disulfide isomerase-like 2-1 (PDIL2-1) from Oryza sativa subsp. japonica (Rice).